A 425-amino-acid chain; its full sequence is Histidine--tRNA ligase 1 (425 aa).

Belongs to the class-II aminoacyl-tRNA synthetase family. As to quaternary structure, homodimer.

Its subcellular location is the cytoplasm. The catalysed reaction is tRNA(His) + L-histidine + ATP = L-histidyl-tRNA(His) + AMP + diphosphate + H(+). This Bacillus cereus (strain ZK / E33L) protein is Histidine--tRNA ligase 1.